Consider the following 208-residue polypeptide: ATP-dependent Clp protease proteolytic subunit (208 aa).

Catalysis depends on Ser107, which acts as the Nucleophile. The active site involves His132.

This sequence belongs to the peptidase S14 family. In terms of assembly, fourteen ClpP subunits assemble into 2 heptameric rings which stack back to back to give a disk-like structure with a central cavity, resembling the structure of eukaryotic proteasomes.

Its subcellular location is the cytoplasm. It carries out the reaction Hydrolysis of proteins to small peptides in the presence of ATP and magnesium. alpha-casein is the usual test substrate. In the absence of ATP, only oligopeptides shorter than five residues are hydrolyzed (such as succinyl-Leu-Tyr-|-NHMec, and Leu-Tyr-Leu-|-Tyr-Trp, in which cleavage of the -Tyr-|-Leu- and -Tyr-|-Trp bonds also occurs).. In terms of biological role, cleaves peptides in various proteins in a process that requires ATP hydrolysis. Has a chymotrypsin-like activity. Plays a major role in the degradation of misfolded proteins. The sequence is that of ATP-dependent Clp protease proteolytic subunit from Methylorubrum populi (strain ATCC BAA-705 / NCIMB 13946 / BJ001) (Methylobacterium populi).